The following is a 50-amino-acid chain: Insulin (50 aa).

Cystine bridges form between cysteine 7–cysteine 36, cysteine 19–cysteine 49, and cysteine 35–cysteine 40.

The protein belongs to the insulin family. In terms of assembly, heterodimer of a B chain and an A chain linked by two disulfide bonds.

It is found in the secreted. Its function is as follows. Insulin decreases blood glucose concentration. It increases cell permeability to monosaccharides, amino acids and fatty acids. It accelerates glycolysis, the pentose phosphate cycle, and glycogen synthesis in liver. The chain is Insulin (ins) from Katsuwonus pelamis (Skipjack tuna).